The following is a 434-amino-acid chain: Prenyltransferase penG (434 aa).

2 stretches are compositionally biased toward polar residues: residues 1-14 (MTQD…QTAG) and 21-35 (THSN…PSTW). The disordered stretch occupies residues 1–35 (MTQDVVTVSSQTAGTIKESGTHSNPDNKTTSPSTW). L-tryptophan contacts are provided by residues 104-105 (EI) and glutamate 108. 6 residues coordinate substrate: arginine 122, lysine 208, arginine 275, lysine 277, tyrosine 279, and tyrosine 348.

The protein belongs to the tryptophan dimethylallyltransferase family.

The enzyme catalyses yaequinolone E + dimethylallyl diphosphate + H2O = [(1'E)-3'-hydroxy-3',7'-dimethylocta-1',6'-dien-1'-yl]-quinolinone B + diphosphate. The protein operates within secondary metabolite biosynthesis. Its pathway is alkaloid biosynthesis. It participates in mycotoxin biosynthesis. Functionally, prenyltransferase; part of the gene cluster that mediates the biosynthesis of penigequinolones, potent insecticidal alkaloids that contain a highly modified 10-carbon prenyl group. The first stage is catalyzed by the nonribosomal peptide synthetase penN that condenses anthranilic acid and O-methyl-L-tyrosine to produce 4'-methoxycyclopeptin. 4'-methoxycyclopeptin is then converted to 4'-methoxydehydrocyclopeptin by the ketoglutarate-dependent dioxygenase penM through dehydrogenation to form a double bond between C-alpha and C-beta of the O-methyltyrosine side chain. PenM also converts its first product methoxydehydrocyclopeptin to 4'-methoxycyclopenin. The following conversion of 4'methoxycyclopenin into 4'-methoxyviridicatin is catalyzed by the cyclopenase penL. 4'-methoxyviridicatin is the precursor of quinolone natural products, and is further converted to quinolinone B. The prenyltransferase penI then catalyzes the canonical Friedel-Crafts alkylation of quinolinone B with dimethylallyl cation to yield dimethylallyl quinolone, which is subjected to FAD-dependent dehydrogenation by the FAD-linked oxidoreductase penH to yield conjugated aryl diene. The delta(3') double bond then serves as the site of the second alkylation with DMAPP catalyzed by the prenyltransferase penG to yield a carbenium ion intermediate, which can be attacked by H(2)O to yield a styrenyl quinolone containing a C3'-hydroxyprenyl chain, or undergo cyclization to yield yaequinolones J1 and J2. The conversion of the styrenyl quinolone into the tetrahydrofuran-containing yaequinolone C is performed by the FAD-dependent monooxygenase penE and involves epoxidation of the terminal C7'-C8' olefin, followed by epoxide ring opening initiated by the C3' hydroxyl group. The predicted cysteine hydrolase penJ acts as an epoxide hydrolase that enhances the rate of the 5-exo-tet cyclization step, increasing the yield of yaequinolone C. PenF catalyzes the cationic rearrangement of the epoxide formed by penE (before ring opening to produce yaequinolone C) into yaequinolone D. Finally, the short-chain dehydrogenase/reductase (SDR)-like reductase penD, catalyzes both the dehydration of yaequinolone D and the reduction of the resulting oxonium to yield penigequinolone. The sequence is that of Prenyltransferase penG from Penicillium thymicola.